We begin with the raw amino-acid sequence, 336 residues long: HTH-type transcriptional regulator RafR (336 aa).

In terms of domain architecture, HTH lacI-type spans 2-55 (SLKAIATTLGISVTTVSRALGGFSDVAASTRERVEAEARRRGYRPNTQARRLKT). The segment at residues 3 to 22 (LKAIATTLGISVTTVSRALG) is a DNA-binding region (H-T-H motif).

As to quaternary structure, homodimer.

Functionally, repressor that negatively controls the expression of the raffinose (raf) operon by binding to the raf operator (rafO) DNA. Acts by binding to two operator sites, O1 and 02, which flank the -35 raf promoter box. RafR bound to 02 alone results in 45 % repression of transcription, whereas RafR bound to O1 leads to only 6% repression. In Escherichia coli, this protein is HTH-type transcriptional regulator RafR.